Here is a 51-residue protein sequence, read N- to C-terminus: Bacteriochlorophyll e-binding protein (51 aa).

His-25 is a binding site for a bacteriochlorophyll e.

The protein belongs to the BChl C/E-binding protein family.

The protein resides in the chlorosome. It is found in the chlorosome envelope. Its function is as follows. Component of the photosynthetic apparatus. The light harvesting B740 complex binds bacteriochlorophyll e. The protein is Bacteriochlorophyll e-binding protein (csmA) of Chlorobium phaeovibrioides.